A 450-amino-acid chain; its full sequence is 23S rRNA (uracil(1939)-C(5))-methyltransferase RlmD (450 aa).

The disordered stretch occupies residues 1-22 (MARNKGGLRFQPSGGARGPAIP). Residues 20-78 (AIPVGKKQRLTIERLAHDGRGIAHEAGMTWFVSGGLPGEELEARVLGARSKVVDARSER) form the TRAM domain. Cysteine 91, cysteine 97, cysteine 100, and cysteine 179 together coordinate [4Fe-4S] cluster. Residues glutamine 283, phenylalanine 312, asparagine 317, glutamate 333, aspartate 360, and aspartate 381 each contribute to the S-adenosyl-L-methionine site. Cysteine 407 acts as the Nucleophile in catalysis.

This sequence belongs to the class I-like SAM-binding methyltransferase superfamily. RNA M5U methyltransferase family. RlmD subfamily.

The catalysed reaction is uridine(1939) in 23S rRNA + S-adenosyl-L-methionine = 5-methyluridine(1939) in 23S rRNA + S-adenosyl-L-homocysteine + H(+). Functionally, catalyzes the formation of 5-methyl-uridine at position 1939 (m5U1939) in 23S rRNA. The sequence is that of 23S rRNA (uracil(1939)-C(5))-methyltransferase RlmD from Pseudomonas aeruginosa (strain UCBPP-PA14).